The sequence spans 84 residues: Putative membrane protein insertion efficiency factor (84 aa).

Belongs to the UPF0161 family.

Its subcellular location is the cell inner membrane. Could be involved in insertion of integral membrane proteins into the membrane. The chain is Putative membrane protein insertion efficiency factor from Acidiphilium cryptum (strain JF-5).